A 285-amino-acid chain; its full sequence is Putative sugar uptake protein lp_2503 (285 aa).

A run of 9 helical transmembrane segments spans residues 2–21 (GILIALIPAIAWGSIGLISG), 31–48 (TLGMTMGALVFGLALWAV), 55–72 (SKIWLIGIVSGLFWSIGQ), 112–134 (GNMYWIGSASVIVLIAGAVLTSL), 147–169 (NWGVGIRALILSTIGYAGYTIVV), 179–196 (VVMPQAVGMLLGALIWSF), 209–228 (NIVTGLVWGIGNLFMFMAMA), 233–255 (AVAYSLSQMGIVISTFGSIYLLG), and 264–283 (VYVVIGSILVIVGGVALSLM).

The protein belongs to the GRP transporter (TC 2.A.7.5) family.

The protein localises to the cell membrane. The polypeptide is Putative sugar uptake protein lp_2503 (Lactiplantibacillus plantarum (strain ATCC BAA-793 / NCIMB 8826 / WCFS1) (Lactobacillus plantarum)).